We begin with the raw amino-acid sequence, 399 residues long: Acetate kinase (399 aa).

N7 is a Mg(2+) binding site. K14 is a binding site for ATP. R91 contributes to the substrate binding site. The active-site Proton donor/acceptor is D148. Residues 208–212 (HLGNG) and 283–285 (DFR) contribute to the ATP site. E384 provides a ligand contact to Mg(2+).

Belongs to the acetokinase family. Homodimer. Requires Mg(2+) as cofactor. Mn(2+) serves as cofactor.

Its subcellular location is the cytoplasm. The enzyme catalyses acetate + ATP = acetyl phosphate + ADP. It participates in metabolic intermediate biosynthesis; acetyl-CoA biosynthesis; acetyl-CoA from acetate: step 1/2. Its function is as follows. Catalyzes the formation of acetyl phosphate from acetate and ATP. Can also catalyze the reverse reaction. This is Acetate kinase from Dictyoglomus thermophilum (strain ATCC 35947 / DSM 3960 / H-6-12).